The primary structure comprises 156 residues: MRRRKAPVREVMPDPIYGNKIITKFINSLMYDGKKSVATEIMYGALKTIDAKGGDLKGINVFNDAIDNVKPIMEVKSRRVGGATYQVPVEVRPARQQALAIRWIISFARKRSERTMMEKLAAELLDAANSKGASFKKKEDTYKMAEANKAFAHYRW.

Belongs to the universal ribosomal protein uS7 family. Part of the 30S ribosomal subunit. Contacts proteins S9 and S11.

One of the primary rRNA binding proteins, it binds directly to 16S rRNA where it nucleates assembly of the head domain of the 30S subunit. Is located at the subunit interface close to the decoding center, probably blocks exit of the E-site tRNA. The polypeptide is Small ribosomal subunit protein uS7 (Campylobacter fetus subsp. fetus (strain 82-40)).